The sequence spans 56 residues: UPF0291 protein Clos_1191 (56 aa).

This sequence belongs to the UPF0291 family.

Its subcellular location is the cytoplasm. This Alkaliphilus oremlandii (strain OhILAs) (Clostridium oremlandii (strain OhILAs)) protein is UPF0291 protein Clos_1191.